The following is a 195-amino-acid chain: Large ribosomal subunit protein uL5 (195 aa).

This sequence belongs to the universal ribosomal protein uL5 family. Part of the 50S ribosomal subunit; part of the 5S rRNA/L5/L18/L25 subcomplex. Contacts the 5S rRNA and the P site tRNA. Forms a bridge to the 30S subunit in the 70S ribosome.

This is one of the proteins that bind and probably mediate the attachment of the 5S RNA into the large ribosomal subunit, where it forms part of the central protuberance. In the 70S ribosome it contacts protein S13 of the 30S subunit (bridge B1b), connecting the 2 subunits; this bridge is implicated in subunit movement. Contacts the P site tRNA; the 5S rRNA and some of its associated proteins might help stabilize positioning of ribosome-bound tRNAs. This chain is Large ribosomal subunit protein uL5, found in Chlorobium chlorochromatii (strain CaD3).